A 481-amino-acid polypeptide reads, in one-letter code: UDP-glycosyltransferase 85A2 (481 aa).

Residues Ser-303, 360–362 (CPQ), 377–385 (HCGWNSTLE), and 399–402 (FAEQ) each bind UDP-alpha-D-glucose.

It belongs to the UDP-glycosyltransferase family. In terms of tissue distribution, expressed in roots, shoots, leaves and flowers.

The sequence is that of UDP-glycosyltransferase 85A2 (UGT85A2) from Arabidopsis thaliana (Mouse-ear cress).